The sequence spans 364 residues: Aminomethyltransferase (364 aa).

Belongs to the GcvT family. The glycine cleavage system is composed of four proteins: P, T, L and H.

It catalyses the reaction N(6)-[(R)-S(8)-aminomethyldihydrolipoyl]-L-lysyl-[protein] + (6S)-5,6,7,8-tetrahydrofolate = N(6)-[(R)-dihydrolipoyl]-L-lysyl-[protein] + (6R)-5,10-methylene-5,6,7,8-tetrahydrofolate + NH4(+). Functionally, the glycine cleavage system catalyzes the degradation of glycine. The protein is Aminomethyltransferase of Escherichia coli O127:H6 (strain E2348/69 / EPEC).